The sequence spans 892 residues: Polyribonucleotide nucleotidyltransferase (892 aa).

Residues Y407–P427 are disordered. Positions 521 and 527 each coordinate Mg(2+). The region spanning P587 to I646 is the KH domain. One can recognise an S1 motif domain in the interval G658–P730. Positions L727–D892 are disordered. Composition is skewed to basic and acidic residues over residues A739–S844 and R851–E877.

The protein belongs to the polyribonucleotide nucleotidyltransferase family. Requires Mg(2+) as cofactor.

It localises to the cytoplasm. It catalyses the reaction RNA(n+1) + phosphate = RNA(n) + a ribonucleoside 5'-diphosphate. Functionally, involved in mRNA degradation. Catalyzes the phosphorolysis of single-stranded polyribonucleotides processively in the 3'- to 5'-direction. This is Polyribonucleotide nucleotidyltransferase from Bifidobacterium adolescentis (strain ATCC 15703 / DSM 20083 / NCTC 11814 / E194a).